The chain runs to 205 residues: ATP-dependent Clp protease proteolytic subunit 2 (205 aa).

The Nucleophile role is filled by S100. H125 is an active-site residue.

This sequence belongs to the peptidase S14 family. Fourteen ClpP subunits assemble into 2 heptameric rings which stack back to back to give a disk-like structure with a central cavity, resembling the structure of eukaryotic proteasomes.

The protein resides in the cytoplasm. It catalyses the reaction Hydrolysis of proteins to small peptides in the presence of ATP and magnesium. alpha-casein is the usual test substrate. In the absence of ATP, only oligopeptides shorter than five residues are hydrolyzed (such as succinyl-Leu-Tyr-|-NHMec, and Leu-Tyr-Leu-|-Tyr-Trp, in which cleavage of the -Tyr-|-Leu- and -Tyr-|-Trp bonds also occurs).. Cleaves peptides in various proteins in a process that requires ATP hydrolysis. Has a chymotrypsin-like activity. Plays a major role in the degradation of misfolded proteins. This Chlamydia abortus (strain DSM 27085 / S26/3) (Chlamydophila abortus) protein is ATP-dependent Clp protease proteolytic subunit 2.